Here is a 1077-residue protein sequence, read N- to C-terminus: Ubiquitin carboxyl-terminal hydrolase 28 (1077 aa).

The tract at residues 60–80 is disordered; the sequence is DERVKEPSQDTVATEPSEVEG. At serine 67 the chain carries Phosphoserine. Residues 97–116 form the UIM domain; it reads DNKDDLQAAIALSLLESPKI. Residue lysine 99 forms a Glycyl lysine isopeptide (Lys-Gly) (interchain with G-Cter in SUMO2) linkage. Residues 162–650 enclose the USP domain; sequence VGLKNVGNTC…SAYCLMYIND (489 aa). The Nucleophile role is filled by cysteine 171. Residue serine 375 is modified to Phosphoserine. Positions 477 to 535 are disordered; it reads HCSVSDQTSKESTSTESSSQDVESTFSSPEDSLPKSKPLTSSRSSMEMPSQPAPRTVTD. A compositionally biased stretch (low complexity) spans 481-501; sequence SDQTSKESTSTESSSQDVEST. Over residues 514 to 524 the composition is skewed to polar residues; sequence PLTSSRSSMEM. Serine 550 is modified (phosphoserine). The active-site Proton acceptor is the histidine 600. The interval 697-728 is disordered; sequence EEQSCKIPQMESSTNSSSQDYSTSQEPSVASS. Residues 707 to 724 show a composition bias toward low complexity; the sequence is ESSTNSSSQDYSTSQEPS. A Phosphoserine modification is found at serine 714. A Glycyl lysine isopeptide (Lys-Gly) (interchain with G-Cter in SUMO2) cross-link involves residue lysine 759. Threonine 1048 is subject to Phosphothreonine.

Belongs to the peptidase C19 family. USP28 subfamily. As to quaternary structure, interacts with ZNF304. Interacts with PRKD1. Interacts with TP53BP1. Interacts with isoform 1 of FBXW7; following DNA damage, dissociates from FBXW7 leading to degradation of MYC. Degraded upon nickel ion level or hypoxia exposure. Post-translationally, phosphorylated upon DNA damage at Ser-67 and Ser-714, by ATM or ATR. Phosphorylated by PRKD1.

The protein resides in the nucleus. Its subcellular location is the nucleoplasm. It carries out the reaction Thiol-dependent hydrolysis of ester, thioester, amide, peptide and isopeptide bonds formed by the C-terminal Gly of ubiquitin (a 76-residue protein attached to proteins as an intracellular targeting signal).. Deubiquitinase involved in DNA damage response checkpoint and MYC proto-oncogene stability. Involved in DNA damage induced apoptosis by specifically deubiquitinating proteins of the DNA damage pathway such as CLSPN. Also involved in G2 DNA damage checkpoint, by deubiquitinating CLSPN, and preventing its degradation by the anaphase promoting complex/cyclosome (APC/C). In contrast, it does not deubiquitinate PLK1. Specifically deubiquitinates MYC in the nucleoplasm, leading to prevent MYC degradation by the proteasome: acts by specifically interacting with isoform 1 of FBXW7 (FBW7alpha) in the nucleoplasm and counteracting ubiquitination of MYC by the SCF(FBW7) complex. In contrast, it does not interact with isoform 4 of FBXW7 (FBW7gamma) in the nucleolus, allowing MYC degradation and explaining the selective MYC degradation in the nucleolus. Deubiquitinates ZNF304, hence preventing ZNF304 degradation by the proteasome and leading to the activated KRAS-mediated promoter hypermethylation and transcriptional silencing of tumor suppressor genes (TSGs) in a subset of colorectal cancers (CRC) cells. The protein is Ubiquitin carboxyl-terminal hydrolase 28 (USP28) of Homo sapiens (Human).